The primary structure comprises 142 residues: Pro-Viral epidermal growth factor (142 aa).

An N-terminal signal peptide occupies residues 1–19 (MSIKYLMLLFAAMIIRSLA). Residues 20–104 (DSGNAIETTS…DTTTSYIPSL (85 aa)) are Extracellular-facing. Asn-34 is a glycosylation site (N-linked (GlcNAc...) asparagine; by host). Cys-71 and Cys-80 are disulfide-bonded. The chain crosses the membrane as a helical span at residues 105–125 (GIVLVLVGIIITCCLLSVYMF). Residues 126 to 142 (TRRTKLPIQDMVVLYFL) lie on the Cytoplasmic side of the membrane.

It belongs to the orthopoxvirus OPG019 family. Interacts with host EGFR. Post-translationally, cleaved at the cell surface by host ADAM10, thereby releasing the secreted form of VGF.

The protein resides in the host membrane. The protein localises to the secreted. In terms of biological role, stimulates cellular proliferation (hyperplasia)and mobility around infected cells to promote rapid and efficient spread of infection. This effect is beneficial for virus replication in vivo, because poxviruses replicate possibly better in proliferating cells than in quiescent cells. Acts by binding host EGFR, inducing its dimerization, autophosphorylation and leading to activation of several cellular pathways regulating cell proliferation or cell survival. The activation by host EGFR of mitogen activated protein kinases (MAPK) and extracellular-signal regulated kinases (ERK) are essential for the positive effect of vaccinia growth factor on poxvirus virulence in vivo. This chain is Pro-Viral epidermal growth factor (OPG019), found in Cynomys gunnisoni (Gunnison's prairie dog).